The following is a 70-amino-acid chain: Large ribosomal subunit protein bL32 (70 aa).

A compositionally biased stretch (basic residues) spans Met-1–His-19. Residues Met-1–Ala-21 form a disordered region.

This sequence belongs to the bacterial ribosomal protein bL32 family.

The polypeptide is Large ribosomal subunit protein bL32 (Granulibacter bethesdensis (strain ATCC BAA-1260 / CGDNIH1)).